The following is an 892-amino-acid chain: Dystroglycan 1 (892 aa).

An N-terminal signal peptide occupies residues 1 to 27; sequence MRMSAGLSLLLPLWGRTFLLLLSVAMA. Topologically, residues 28-750 are extracellular; sequence QSHWPSEAGR…SSEDDVYLHT (723 aa). Residues 30 to 405 are required for laminin recognition; sequence HWPSEAGRDW…GQIRPTMTIP (376 aa). Residues 46-68 are O-glycosylated at one site; it reads SMHSVLSDLHEAVPTVVGIPDGI. Asn138 is a glycosylation site (N-linked (GlcNAc...) asparagine). Cysteines 179 and 261 form a disulfide. Positions 313–482 are mucin-like domain; that stretch reads ATPTPVTAIG…PPTRIRTTTS (170 aa). Residues Thr314, Thr316, and Thr376 are each glycosylated (O-linked (Man6P...) threonine). Positions 378–497 are disordered; sequence TLGPIQPTRV…GEPNQRPELK (120 aa). Residues 410 to 444 are compositionally biased toward low complexity; sequence PTAVATPPTTTTKKPRVSTPKPATPSTDSSTTTTR. The interval 460–482 is O-glycosylated at seven sites with GalNAc; that stretch reads TTKAPITRLETASPPTRIRTTTS. Residues 600–709 enclose the Peptidase S72 domain; it reads RAPARFKAKF…SSIAVTGSGS (110 aa). Residues Asn638, Asn646, and Asn658 are each glycosylated (N-linked (GlcNAc...) asparagine). Residues Cys666 and Cys710 are joined by a disulfide bond. Residues 721 to 742 are disordered; the sequence is PRRVPSEVPSTDVPDRDPEKSS. The span at 733-742 shows a compositional bias: basic and acidic residues; that stretch reads VPDRDPEKSS. A helical membrane pass occupies residues 751 to 771; it reads VIPAVVVAAILLIAGIIAMIC. At 772 to 892 the chain is on the cytoplasmic side; sequence YRKKRKGKLT…YRSPPPYVPP (121 aa). A Nuclear localization signal motif is present at residues 773-779; the sequence is RKKRKGK. The residue at position 787 (Thr787) is a Phosphothreonine. The required for interaction with CAV3 stretch occupies residues 816–892; it reads LQEEKAPLPP…YRSPPPYVPP (77 aa). A disordered region spans residues 820–892; it reads KAPLPPPEYP…YRSPPPYVPP (73 aa). Positions 829–843 are enriched in polar residues; it reads PNQSVPETTPLNQDT. The segment covering 856-867 has biased composition (pro residues); sequence NAPPYQPPPPFT. The interval 877–892 is required for binding DMD and UTRN; the sequence is PKNMTPYRSPPPYVPP. Positions 886 to 889 match the PPXY motif motif; sequence PPPY. At Tyr889 the chain carries Phosphotyrosine; by SRC.

Monomer. Heterodimer of alpha- and beta-dystroglycan subunits which are the central components of the dystrophin-glycoprotein complex. This complex then can form a dystrophin-associated glycoprotein complex (DGC) which is composed of three subcomplexes: a cytoplasmic complex comprised of DMD (or UTRN), DTNA and a number of syntrophins, such as SNTB1, SNTB2, SNTG1 and SNTG2, the transmembrane dystroglycan complex, and the sarcoglycan-sarcospan complex. Interacts (via the N-terminal of alphaDAG1) with LARGE1; the interaction enhances laminin binding. Interacts with SGCD. Interacts with AGR2 and AGR3. Interacts (betaDAG1) with DMD; the interaction is inhibited by phosphorylation on the PPXY motif. Interacts (betaDAG1, via its PPXY motif) with UTRN (via its WWW and ZZ domains); the interaction is inhibited by phosphorylation on the PPXY motif. Interacts (betaDAG1, via its phosphorylated PPXY motif) with the SH2 domain-containing proteins, FYN, CSK, NCK and SHC. Interacts (betaDAG1) with CAV3 (via a central WW-like domain); the interaction disrupts the binding of DMD. BetaDAG1 directly interacts with ANK3, but not with ANK2; this interaction does not interfere with DMD-binding and is required for retention at costameres. Identified in a dystroglycan complex that contains at least PRX, DRP2, UTRN, DMD and DAG1. Interacts with POMGNT1. BetaDAG1 interacts with CD93. In terms of processing, O-glycosylated. POMGNT1 catalyzes the initial addition of N-acetylglucosamine, giving rise to the GlcNAc(beta1-2)Man(alpha1-)O-Ser/Thr moiety and thus providing the necessary basis for the addition of further carbohydrate moieties. Heavily O-glycosylated comprising of up to two thirds of its mass and the carbohydrate composition differs depending on tissue type. Mucin-type O-glycosylation is important for ligand binding activity. O-mannosylation is found in high abundance in both brain and muscle where the most abundant glycan is Sia-alpha-2-3-Gal-beta-1-4-Glc-NAc-beta-1-2-Man. In muscle, glycosylation on Thr-314, Thr-316 and Thr-376 by a phosphorylated O-mannosyl glycan with the structure 2-(N-acetylamido)-2-deoxygalactosyl-beta-1,3-2-(N-acetylamido)-2-deoxyglucosyl-beta-1,4-6-phosphomannose is mediated by like-acetylglucosaminyltransferase (LARGE1) protein amd is required for laminin binding. O-glycosylated in the N-terminal region with a core 1 or possibly core 8 glycan. The brain form displays a unique glycosylation pattern which is absent in other tissues; this form shows enhanced binding to laminin LAMA5 compared to the skeletal muscle form. N-glycosylated. Post-translationally, autolytic cleavage produces the alpha and beta subunits. In cutaneous cells, as well as in certain pathological conditions, shedding of beta-dystroglycan can occur releasing a peptide of about 30 kDa. In terms of processing, SRC-mediated phosphorylation of the PPXY motif of the beta subunit recruits SH2 domain-containing proteins, but inhibits binding to WWW domain-containing proteins, DMD and UTRN. This phosphorylation also inhibits nuclear entry.

It localises to the secreted. The protein resides in the extracellular space. Its subcellular location is the cell membrane. The protein localises to the cytoplasm. It is found in the cytoskeleton. It localises to the nucleus. The protein resides in the nucleoplasm. Its subcellular location is the sarcolemma. The protein localises to the postsynaptic cell membrane. In terms of biological role, the dystroglycan complex is involved in a number of processes including laminin and basement membrane assembly, sarcolemmal stability, cell survival, peripheral nerve myelination, nodal structure, cell migration, and epithelial polarization. Extracellular peripheral glycoprotein that acts as a receptor for extracellular matrix proteins containing laminin-G domains. Receptor for laminin-2 (LAMA2) and agrin in peripheral nerve Schwann cells. Also acts as a receptor for laminin LAMA5. Its function is as follows. Transmembrane protein that plays important roles in connecting the extracellular matrix to the cytoskeleton. Acts as a cell adhesion receptor in both muscle and non-muscle tissues. Receptor for both DMD and UTRN and, through these interactions, scaffolds axin to the cytoskeleton. Also functions in cell adhesion-mediated signaling and implicated in cell polarity. The polypeptide is Dystroglycan 1 (Canis lupus familiaris (Dog)).